The sequence spans 378 residues: MKGVIFCLVVLLWRQAWVSSKSHKCDFTKEKYLLSGEKEVSCEIDANPSDDITFICPNKIDSLCFHTVNISKNINQNKSTMSIQDLLYGSVVYGNTLFISPYVRTNTPFYCFCNLDTVTIQKFLKINRFLKDDDELSEADVMKHLKGGNVSEAQADEYLNKALNRFKKMKDLSKFFNDQADNTTKLNLPKSLNIPNDILNYDVYNSSNNRNDIVVKDEVTNKQIISKRGIMSVFVRSNNNVIKGCDFGNNNKNYFSHPISVAGKVNNKVCKIQGKPGELVGFKCAFEENGKVEPPNCFDQVLHKNKVTDLKTLIPGYASYTNKHSSKYPYYLKIPHFVNEQYTIQCKCKSNNSQNEYTFELDIQPGESEVVLNSFKTS.

An N-terminal signal peptide occupies residues 1-20; sequence MKGVIFCLVVLLWRQAWVSS. The region spanning 21–133 is the 6-Cys 1 domain; sequence KSHKCDFTKE…LKINRFLKDD (113 aa). Disulfide bonds link cysteine 25–cysteine 42, cysteine 56–cysteine 113, and cysteine 64–cysteine 111. N-linked (GlcNAc...) asparagine glycans are attached at residues asparagine 77, asparagine 149, asparagine 182, and asparagine 205. The 6-Cys 2 domain occupies 241–375; that stretch reads VIKGCDFGNN…GESEVVLNSF (135 aa). Disulfide bonds link cysteine 245–cysteine 270, cysteine 284–cysteine 348, and cysteine 297–cysteine 346. An N-linked (GlcNAc...) asparagine glycan is attached at asparagine 351.

Heterodimer; heterodimerizes with PF12. May form an antiparallel heterodimer with PF12. Post-translationally, processed into a soluble form.

The protein resides in the cell surface. It localises to the cell membrane. This chain is Merozoite surface protein P41 (PF41), found in Plasmodium falciparum (isolate 3D7).